We begin with the raw amino-acid sequence, 115 residues long: Holo-[acyl-carrier-protein] synthase (115 aa).

Mg(2+) is bound by residues Asp8 and Glu56.

It belongs to the P-Pant transferase superfamily. AcpS family. The cofactor is Mg(2+).

It is found in the cytoplasm. The catalysed reaction is apo-[ACP] + CoA = holo-[ACP] + adenosine 3',5'-bisphosphate + H(+). In terms of biological role, transfers the 4'-phosphopantetheine moiety from coenzyme A to a Ser of acyl-carrier-protein. The protein is Holo-[acyl-carrier-protein] synthase of Ureaplasma parvum serovar 3 (strain ATCC 27815 / 27 / NCTC 11736).